We begin with the raw amino-acid sequence, 570 residues long: uncharacterized protein (570 aa).

A compositionally biased stretch (low complexity) spans 1–15 (MTESIISSRTASISS). Residues 1-34 (MTESIISSRTASISSKEGYEIRQGSTDSSSLDLE) are disordered. S14 is modified (phosphoserine). 12 helical membrane-spanning segments follow: residues 96–116 (WKLY…LFIG), 141–161 (NLNT…HYIM), 163–183 (TFPL…IVFL), 198–218 (FFLG…MGMF), 229–249 (PVFW…AYGL), 261–281 (LFMI…FFYY), 328–348 (PITW…NLAY), 369–389 (VALA…MYLI), 397–417 (AMFW…LPWS), 423–443 (LATM…LGWT), 457–477 (GLMF…LWQS), and 485–505 (PAWI…YLVA).

Belongs to the major facilitator superfamily. Allantoate permease family.

The protein localises to the endoplasmic reticulum. Its subcellular location is the membrane. This is an uncharacterized protein from Schizosaccharomyces pombe (strain 972 / ATCC 24843) (Fission yeast).